The primary structure comprises 1072 residues: DNA-directed RNA polymerase subunit beta (1072 aa).

Belongs to the RNA polymerase beta chain family. As to quaternary structure, in plastids the minimal PEP RNA polymerase catalytic core is composed of four subunits: alpha, beta, beta', and beta''. When a (nuclear-encoded) sigma factor is associated with the core the holoenzyme is formed, which can initiate transcription.

Its subcellular location is the plastid. The protein resides in the chloroplast. The enzyme catalyses RNA(n) + a ribonucleoside 5'-triphosphate = RNA(n+1) + diphosphate. In terms of biological role, DNA-dependent RNA polymerase catalyzes the transcription of DNA into RNA using the four ribonucleoside triphosphates as substrates. This chain is DNA-directed RNA polymerase subunit beta, found in Lepidium virginicum (Virginia pepperweed).